A 136-amino-acid polypeptide reads, in one-letter code: Large ribosomal subunit protein uL16 (136 aa).

This sequence belongs to the universal ribosomal protein uL16 family. Part of the 50S ribosomal subunit.

Binds 23S rRNA and is also seen to make contacts with the A and possibly P site tRNAs. In Rickettsia akari (strain Hartford), this protein is Large ribosomal subunit protein uL16.